Reading from the N-terminus, the 508-residue chain is Probable cytosol aminopeptidase (508 aa).

Mn(2+)-binding residues include Lys-274 and Asp-279. The active site involves Lys-286. Mn(2+) contacts are provided by Asp-297, Asp-356, and Glu-358. Arg-360 is a catalytic residue.

It belongs to the peptidase M17 family. Mn(2+) is required as a cofactor.

The protein localises to the cytoplasm. It catalyses the reaction Release of an N-terminal amino acid, Xaa-|-Yaa-, in which Xaa is preferably Leu, but may be other amino acids including Pro although not Arg or Lys, and Yaa may be Pro. Amino acid amides and methyl esters are also readily hydrolyzed, but rates on arylamides are exceedingly low.. The enzyme catalyses Release of an N-terminal amino acid, preferentially leucine, but not glutamic or aspartic acids.. Its function is as follows. Presumably involved in the processing and regular turnover of intracellular proteins. Catalyzes the removal of unsubstituted N-terminal amino acids from various peptides. The sequence is that of Probable cytosol aminopeptidase from Paraburkholderia xenovorans (strain LB400).